A 379-amino-acid polypeptide reads, in one-letter code: Leukocyte elastase inhibitor (379 aa).

Residue methionine 1 is modified to N-acetylmethionine. An N6-acetyllysine mark is found at lysine 137 and lysine 177. Residues 351–379 (NFNADHPFIFFIRHNPSANILFLGRFSSP) form a CARD-binding motif (CBM) region.

Belongs to the serpin family. Ov-serpin subfamily. As to quaternary structure, monomer. Interacts (via C-terminus) with CASP1; CASP4 (via CARD domain) and CASP5; these interactions regulate the activity of inflammatory caspases. Interacts with PRTN3. Interacts with GZMH. Interacts with TMSB4. Post-translationally, the N-terminus is blocked.

Its subcellular location is the secreted. It is found in the cytoplasm. It localises to the cytolytic granule. The protein localises to the early endosome. Its function is as follows. Neutrophil serine protease inhibitor that plays an essential role in the regulation of the innate immune response, inflammation and cellular homeostasis. Acts primarily to protect the cell from proteases released in the cytoplasm during stress or infection. These proteases are important in killing microbes but when released from granules, these potent enzymes also destroy host proteins and contribute to mortality. Regulates the activity of the neutrophil proteases elastase, cathepsin G, proteinase-3, chymase, chymotrypsin, and kallikrein-3. Also acts as a potent intracellular inhibitor of GZMH by directly blocking its proteolytic activity. During inflammation, limits the activity of inflammatory caspases CASP1, CASP4 and CASP5 by suppressing their caspase-recruitment domain (CARD) oligomerization and enzymatic activation. When secreted, promotes the proliferation of beta-cells via its protease inhibitory function. The chain is Leukocyte elastase inhibitor (SERPINB1) from Equus caballus (Horse).